The chain runs to 186 residues: Tumor necrosis factor, alpha-induced protein 8-like protein 2 B (186 aa).

It belongs to the TNFAIP8 family. TNFAIP8L2 subfamily.

Acts as a negative regulator of innate and adaptive immunity by maintaining immune homeostasis. Negative regulator of Toll-like receptor and T-cell receptor function. Prevents hyperresponsiveness of the immune system and maintains immune homeostasis. Inhibits jun/ap1 and NF-kappa-B activation. Promotes Fas-induced apoptosis. The chain is Tumor necrosis factor, alpha-induced protein 8-like protein 2 B (tnfaip8l2b) from Danio rerio (Zebrafish).